The primary structure comprises 156 residues: Ribosomal RNA large subunit methyltransferase H (156 aa).

Residues L73, G104, and 123–128 (LSSLTL) contribute to the S-adenosyl-L-methionine site.

It belongs to the RNA methyltransferase RlmH family. In terms of assembly, homodimer.

The protein resides in the cytoplasm. It catalyses the reaction pseudouridine(1915) in 23S rRNA + S-adenosyl-L-methionine = N(3)-methylpseudouridine(1915) in 23S rRNA + S-adenosyl-L-homocysteine + H(+). Its function is as follows. Specifically methylates the pseudouridine at position 1915 (m3Psi1915) in 23S rRNA. The chain is Ribosomal RNA large subunit methyltransferase H from Neisseria gonorrhoeae (strain NCCP11945).